The following is a 438-amino-acid chain: V-type ATP synthase beta chain (438 aa).

The protein belongs to the ATPase alpha/beta chains family.

Its function is as follows. Produces ATP from ADP in the presence of a proton gradient across the membrane. The V-type beta chain is a regulatory subunit. This is V-type ATP synthase beta chain from Chlamydia trachomatis serovar L2b (strain UCH-1/proctitis).